Here is a 269-residue protein sequence, read N- to C-terminus: MRYNIVSKGDHKSNSIKENMEAQMQDTKMIKDTETPEIVISVGGDGTLLEAFHKYSYRLSETAFVGVHTGHLGFYADWLPHESDKLIREIIDGDYEVIKYPLIDITVNYNDEKNPSHHIALNEATMKTEDNTTLVADVSLRGQHFERFRGDGLCISTPSGSTAYNKALGGALIHPSLRAIQLTEIASINNRVFRTVGSPLVLPAHHYCLITPVDQRTIMTSIDHVTTKHHNVKSIEYKVSEEEIRFARFRPFPFWKRVHDSFISDGRDD.

Catalysis depends on Asp45, which acts as the Proton acceptor. Residues 45-46 (DG), 122-123 (NE), Arg149, Asp151, and Ala186 contribute to the NAD(+) site.

Belongs to the NAD kinase family. The cofactor is a divalent metal cation.

It is found in the cytoplasm. It catalyses the reaction NAD(+) + ATP = ADP + NADP(+) + H(+). Functionally, involved in the regulation of the intracellular balance of NAD and NADP, and is a key enzyme in the biosynthesis of NADP. Catalyzes specifically the phosphorylation on 2'-hydroxyl of the adenosine moiety of NAD to yield NADP. The chain is NAD kinase from Staphylococcus carnosus (strain TM300).